The following is a 244-amino-acid chain: Acetoacetate decarboxylase (244 aa).

Lysine 115 (schiff-base intermediate with acetoacetate) is an active-site residue.

Belongs to the ADC family. As to quaternary structure, homododecamer.

The catalysed reaction is acetoacetate + H(+) = acetone + CO2. Functionally, catalyzes the conversion of acetoacetate to acetone and carbon dioxide. This is Acetoacetate decarboxylase from Clostridium acetobutylicum (strain ATCC 824 / DSM 792 / JCM 1419 / IAM 19013 / LMG 5710 / NBRC 13948 / NRRL B-527 / VKM B-1787 / 2291 / W).